Consider the following 150-residue polypeptide: D-aminoacyl-tRNA deacylase (150 aa).

Residues 137 to 138 (GP) carry the Gly-cisPro motif, important for rejection of L-amino acids motif.

It belongs to the DTD family. In terms of assembly, homodimer.

The protein localises to the cytoplasm. The enzyme catalyses glycyl-tRNA(Ala) + H2O = tRNA(Ala) + glycine + H(+). It catalyses the reaction a D-aminoacyl-tRNA + H2O = a tRNA + a D-alpha-amino acid + H(+). An aminoacyl-tRNA editing enzyme that deacylates mischarged D-aminoacyl-tRNAs. Also deacylates mischarged glycyl-tRNA(Ala), protecting cells against glycine mischarging by AlaRS. Acts via tRNA-based rather than protein-based catalysis; rejects L-amino acids rather than detecting D-amino acids in the active site. By recycling D-aminoacyl-tRNA to D-amino acids and free tRNA molecules, this enzyme counteracts the toxicity associated with the formation of D-aminoacyl-tRNA entities in vivo and helps enforce protein L-homochirality. This chain is D-aminoacyl-tRNA deacylase, found in Alkalilimnicola ehrlichii (strain ATCC BAA-1101 / DSM 17681 / MLHE-1).